Consider the following 469-residue polypeptide: 3-isopropylmalate dehydratase large subunit (469 aa).

3 residues coordinate [4Fe-4S] cluster: Cys-347, Cys-408, and Cys-411.

Belongs to the aconitase/IPM isomerase family. LeuC type 1 subfamily. Heterodimer of LeuC and LeuD. [4Fe-4S] cluster is required as a cofactor.

The enzyme catalyses (2R,3S)-3-isopropylmalate = (2S)-2-isopropylmalate. It participates in amino-acid biosynthesis; L-leucine biosynthesis; L-leucine from 3-methyl-2-oxobutanoate: step 2/4. In terms of biological role, catalyzes the isomerization between 2-isopropylmalate and 3-isopropylmalate, via the formation of 2-isopropylmaleate. The protein is 3-isopropylmalate dehydratase large subunit of Histophilus somni (strain 129Pt) (Haemophilus somnus).